The sequence spans 476 residues: Bifunctional protein HldE (476 aa).

The ribokinase stretch occupies residues 1–318 (MKPTLPNYDQ…AEAIHGSQDS (318 aa)). 195–198 (NMLE) provides a ligand contact to ATP. Asp264 is an active-site residue. Residues 344 to 476 (MTNGCFDILH…IIEAIKGGRG (133 aa)) form a cytidylyltransferase region.

The protein in the N-terminal section; belongs to the carbohydrate kinase PfkB family. In the C-terminal section; belongs to the cytidylyltransferase family. As to quaternary structure, homodimer.

It carries out the reaction D-glycero-beta-D-manno-heptose 7-phosphate + ATP = D-glycero-beta-D-manno-heptose 1,7-bisphosphate + ADP + H(+). The enzyme catalyses D-glycero-beta-D-manno-heptose 1-phosphate + ATP + H(+) = ADP-D-glycero-beta-D-manno-heptose + diphosphate. It functions in the pathway nucleotide-sugar biosynthesis; ADP-L-glycero-beta-D-manno-heptose biosynthesis; ADP-L-glycero-beta-D-manno-heptose from D-glycero-beta-D-manno-heptose 7-phosphate: step 1/4. The protein operates within nucleotide-sugar biosynthesis; ADP-L-glycero-beta-D-manno-heptose biosynthesis; ADP-L-glycero-beta-D-manno-heptose from D-glycero-beta-D-manno-heptose 7-phosphate: step 3/4. Functionally, catalyzes the phosphorylation of D-glycero-D-manno-heptose 7-phosphate at the C-1 position to selectively form D-glycero-beta-D-manno-heptose-1,7-bisphosphate. In terms of biological role, catalyzes the ADP transfer from ATP to D-glycero-beta-D-manno-heptose 1-phosphate, yielding ADP-D-glycero-beta-D-manno-heptose. This is Bifunctional protein HldE from Aliivibrio fischeri (strain MJ11) (Vibrio fischeri).